The sequence spans 62 residues: UPF0434 protein FTM_0733 (62 aa).

The protein belongs to the UPF0434 family.

In Francisella tularensis subsp. mediasiatica (strain FSC147), this protein is UPF0434 protein FTM_0733.